The following is a 399-amino-acid chain: Bifunctional enzyme IspD/IspF (399 aa).

The 2-C-methyl-D-erythritol 4-phosphate cytidylyltransferase stretch occupies residues 1-239 (MHTWALLLAA…SSEKKNMQVP (239 aa)). The interval 240–399 (CVGWGYDVHR…AVTALRRVSS (160 aa)) is 2-C-methyl-D-erythritol 2,4-cyclodiphosphate synthase. Residues aspartate 246 and histidine 248 each contribute to the a divalent metal cation site. 4-CDP-2-C-methyl-D-erythritol 2-phosphate-binding positions include 246-248 (DVH) and 273-274 (HS). Residue histidine 281 coordinates a divalent metal cation. 4-CDP-2-C-methyl-D-erythritol 2-phosphate contacts are provided by residues 295–297 (DIG), 300–304 (FPDTD), 371–374 (TTEE), and phenylalanine 378.

It in the N-terminal section; belongs to the IspD/TarI cytidylyltransferase family. IspD subfamily. This sequence in the C-terminal section; belongs to the IspF family. It depends on a divalent metal cation as a cofactor.

The enzyme catalyses 2-C-methyl-D-erythritol 4-phosphate + CTP + H(+) = 4-CDP-2-C-methyl-D-erythritol + diphosphate. It carries out the reaction 4-CDP-2-C-methyl-D-erythritol 2-phosphate = 2-C-methyl-D-erythritol 2,4-cyclic diphosphate + CMP. It participates in isoprenoid biosynthesis; isopentenyl diphosphate biosynthesis via DXP pathway; isopentenyl diphosphate from 1-deoxy-D-xylulose 5-phosphate: step 2/6. The protein operates within isoprenoid biosynthesis; isopentenyl diphosphate biosynthesis via DXP pathway; isopentenyl diphosphate from 1-deoxy-D-xylulose 5-phosphate: step 4/6. Functionally, bifunctional enzyme that catalyzes the formation of 4-diphosphocytidyl-2-C-methyl-D-erythritol from CTP and 2-C-methyl-D-erythritol 4-phosphate (MEP) (IspD), and catalyzes the conversion of 4-diphosphocytidyl-2-C-methyl-D-erythritol 2-phosphate (CDP-ME2P) to 2-C-methyl-D-erythritol 2,4-cyclodiphosphate (ME-CPP) with a corresponding release of cytidine 5-monophosphate (CMP) (IspF). This chain is Bifunctional enzyme IspD/IspF, found in Oleidesulfovibrio alaskensis (strain ATCC BAA-1058 / DSM 17464 / G20) (Desulfovibrio alaskensis).